The following is a 725-amino-acid chain: MADKEATVYVIDLGESMADCHNGRNESDLEFGMRYIWDKITTTVAASRKTWNVGVVGLNTDETNNNENREEYQGYENISVLQELGPMTMASLRALKSKIEPSSTSSADAISAIVVALRMIQTFTKKLKYKRKIIVVTNGESPIDDDQSEEVANMLNDVGIELIVLGVDFDDAEYGFKEEDKPRHKEQNEKILKTLVDHCESGAFGTMAQAVEELATPRIKSVRPFKAYDGPLTLGDPQKYPSALSIQVERYFKTKRATPPSASNVANPNGPPQTQVWNEDDGVPFSGVGLQPVKQLRTYRIEDSKAAGGKKDVDMEDLAKAYQYGRTVVPFGKSEEDYLKYETTKSFTIIGFVPMSSYEPFLNMGETGLIVAQKVNEEAELGLSALIHALHELESYAVARYVNKDKAPPQILLLKPNPAIEDDIECLYDIPLPFAEDVRSYQFPPLDKVLTITGNVLTEHRLLPNNDLQQAMSDYVDAMDLTEYGQDDDGHPAEYAPIDDLYNPVIHHMNQAIRNRAVNPDAPLPPVAEILTRFTHPPEPLLAKAKTEIDGLIQAAEVKKVPPKVQGKRGRKDTVKPLSGLDIDALLSETRPRTKKTPIISTENAIPEFKQILETAEDDETIEIAAKQMGNIICKLVSDSFADVLYPRAAENLRVMREELINMEVPTLYNKYITKLKESLLSGNLNGDRREMWFRWIVGGRLGLITQDESEVSEVSENEAKAFLK.

The 247-residue stretch at 232–478 (LTLGDPQKYP…QQAMSDYVDA (247 aa)) folds into the Ku domain.

This sequence belongs to the ku80 family. Heterodimer of mus-51/ku70 and mus-52/ku80.

It localises to the nucleus. Its subcellular location is the chromosome. It is found in the telomere. It catalyses the reaction ATP + H2O = ADP + phosphate + H(+). Single-stranded DNA-dependent ATP-dependent helicase. Involved in non-homologous end joining (NHEJ) DNA double strand break repair. DNA-binding is sequence-independent but has a high affinity to nicks in double-stranded DNA and to the ends of duplex DNA. Binds to naturally occurring chromosomal ends, and therefore provides chromosomal end protection. Required also for telomere recombination to repair telomeric ends in the absence of telomerase. ku70, of the ku70/ku80 heterodimer, binds to the stem loop of tlc1, the RNA component of telomerase. Involved in telomere maintenance. Interacts with telomeric repeats and subtelomeric sequences thereby controlling telomere length and protecting against subtelomeric rearrangement. Maintains telomeric chromatin, which is involved in silencing the expression of genes located at the telomere. Required for mating-type switching. The polypeptide is ATP-dependent DNA helicase II subunit 2 (mus-52) (Neurospora crassa (strain ATCC 24698 / 74-OR23-1A / CBS 708.71 / DSM 1257 / FGSC 987)).